A 428-amino-acid polypeptide reads, in one-letter code: Cyclic AMP-responsive element-binding protein 3-like protein 3-B (428 aa).

Over 1-286 (MDHYSDQGGD…VMNGSNKPVQ (286 aa)) the chain is Cytoplasmic. Over residues 67–83 (VSGSPVWSPSPSDSGIS) the composition is skewed to low complexity. Residues 67-104 (VSGSPVWSPSPSDSGISEDPHSDHIDSPPPNASPPMEP) are disordered. Over residues 93-103 (SPPPNASPPME) the composition is skewed to pro residues. Residues 210 to 273 (ILKKIRRKIR…ISLMEQLRRL (64 aa)) enclose the bZIP domain. The basic motif stretch occupies residues 212–241 (KKIRRKIRNKQSAQESRKKKKEYIDGLESR). The interval 252 to 273 (LQRKVFQLEKCNISLMEQLRRL) is leucine-zipper. A helical; Signal-anchor for type II membrane protein transmembrane segment spans residues 287–303 (AGTCVLVLLLSFTLILL). Over 304-428 (PNLKPFTDTK…SRRSPHADDM (125 aa)) the chain is Lumenal. Positions 381–428 (TEYDPESHNHSFDQHDEHHHGDPITGHVATVTLNPRRGSRRSPHADDM) are disordered. Basic and acidic residues predominate over residues 385–402 (PESHNHSFDQHDEHHHGD). N-linked (GlcNAc...) asparagine glycosylation is present at Asn389.

The protein belongs to the bZIP family. ATF subfamily. Binds DNA as a dimer. Controlled by regulated intramembrane proteolysis (RIP). A fragment containing the cytoplasmic transcription factor domain is released by proteolysis. The cleavage seems to be performed sequentially by site-1 and site-2 proteases.

It is found in the endoplasmic reticulum membrane. The protein localises to the nucleus. Functionally, transcriptional activator. Binds the cAMP response element (CRE). Activates transcription through box-B element and CRE. Seems to function synergistically with atf6. Regulates FGF21 transcription. This is Cyclic AMP-responsive element-binding protein 3-like protein 3-B (creb3l3b) from Danio rerio (Zebrafish).